Consider the following 365-residue polypeptide: Alanine racemase (365 aa).

Catalysis depends on lysine 35, which acts as the Proton acceptor; specific for D-alanine. At lysine 35 the chain carries N6-(pyridoxal phosphate)lysine. Arginine 130 is a substrate binding site. Residue tyrosine 256 is the Proton acceptor; specific for L-alanine of the active site. Residue methionine 304 coordinates substrate.

It belongs to the alanine racemase family. The cofactor is pyridoxal 5'-phosphate.

The enzyme catalyses L-alanine = D-alanine. It functions in the pathway amino-acid biosynthesis; D-alanine biosynthesis; D-alanine from L-alanine: step 1/1. In terms of biological role, catalyzes the interconversion of L-alanine and D-alanine. May also act on other amino acids. This is Alanine racemase (alr) from Acidovorax ebreus (strain TPSY) (Diaphorobacter sp. (strain TPSY)).